The primary structure comprises 357 residues: Homoarginine-6-hydroxylase 2-ODD-C23.2 (357 aa).

Residues 208–308 form the Fe2OG dioxygenase domain; the sequence is PFWVMRIIGY…RVCVAFFYET (101 aa). Fe cation-binding residues include histidine 231, aspartate 233, and histidine 289. Position 299 (arginine 299) interacts with 2-oxoglutarate.

Belongs to the iron/ascorbate-dependent oxidoreductase family. Requires Fe(2+) as cofactor. In terms of tissue distribution, expressed in senescent leaves.

The protein localises to the cytoplasm. The protein resides in the cytosol. The enzyme catalyses L-homoarginine + 2-oxoglutarate + O2 = 6-hydroxy-L-homoarginine + succinate + CO2. It carries out the reaction L-arginine + 2-oxoglutarate + O2 = 5-hydroxy-L-arginine + succinate + CO2. With respect to regulation, slightly inhibited by canavanine (Can), the 5-oxa-analog of arginine. Functionally, 2-oxoglutarate-dependent dioxygenase catalyzing homoarginine 6-hydroxylation and arginine-5-hydroxylation thus producing 6-hydroxy-L-homoarginine and 5-hydroxy-L-arginine, respectively. Guanidine (Gd) is in turn synthesized by the spontaneous conversion of 6-hydroxy-L-homoarginine and 5-hydroxy-L-arginine to (S)-2-amino-6-oxohexanoate (RHEA:79843) and L-glutamate 5-semialdehyde (RHEA:31527); guanidine is a nitrogen-rich compound that may serve as a defense or signaling substance. This Arabidopsis thaliana (Mouse-ear cress) protein is Homoarginine-6-hydroxylase 2-ODD-C23.2.